Here is an 85-residue protein sequence, read N- to C-terminus: Large ribosomal subunit protein bL27 (85 aa).

Belongs to the bacterial ribosomal protein bL27 family.

The chain is Large ribosomal subunit protein bL27 from Ruthia magnifica subsp. Calyptogena magnifica.